We begin with the raw amino-acid sequence, 213 residues long: Octanoyltransferase (213 aa).

Residues 35 to 213 enclose the BPL/LPL catalytic domain; the sequence is DERGDAVLLL…ERHLPTLIEP (179 aa). Substrate is bound by residues 73–80, 145–147, and 158–160; these read RGGKITWH, AIG, and GFS. The Acyl-thioester intermediate role is filled by Cys-176.

This sequence belongs to the LipB family.

The protein localises to the cytoplasm. The catalysed reaction is octanoyl-[ACP] + L-lysyl-[protein] = N(6)-octanoyl-L-lysyl-[protein] + holo-[ACP] + H(+). Its pathway is protein modification; protein lipoylation via endogenous pathway; protein N(6)-(lipoyl)lysine from octanoyl-[acyl-carrier-protein]: step 1/2. Catalyzes the transfer of endogenously produced octanoic acid from octanoyl-acyl-carrier-protein onto the lipoyl domains of lipoate-dependent enzymes. Lipoyl-ACP can also act as a substrate although octanoyl-ACP is likely to be the physiological substrate. The sequence is that of Octanoyltransferase from Salinispora tropica (strain ATCC BAA-916 / DSM 44818 / JCM 13857 / NBRC 105044 / CNB-440).